A 149-amino-acid chain; its full sequence is AKELSEKQIAEIKDAFDMFDIDGDGQITSKELRSVMKSLGRTPSDAELEEMIREVDTDGNGTIEYAEFVEMMAKQMGPTDPEKEMREAFRVFDKDGNGLITAAELRQVMANFSDEKLTSEEISEMIREADIDGDGMVNYEEFVKMMTPK.

Ala1 is subject to N-acetylalanine. 4 EF-hand domains span residues 7 to 42 (KQIA…LGRT), 43 to 78 (PSDA…QMGP), 80 to 115 (DPEK…FSDE), and 117 to 149 (LTSE…MTPK). The Ca(2+) site is built by Asp20, Asp22, Asp24, Gln26, Glu31, Asp56, Asp58, Asn60, Thr62, Glu67, Asp93, Asp95, Asn97, Glu104, Asp130, Asp132, Asp134, Met136, and Glu141.

The protein belongs to the calmodulin family.

Its function is as follows. Not known. This protein has four functional calcium-binding sites. In Doryteuthis pealeii (Longfin inshore squid), this protein is Squidulin.